Reading from the N-terminus, the 185-residue chain is Iron-sulfur assembly protein 2 (185 aa).

Fe cation is bound by residues C89, C175, and C177.

It belongs to the HesB/IscA family.

The protein localises to the mitochondrion matrix. In terms of biological role, involved in the assembly of mitochondrial and cytoplasmic iron-sulfur proteins. Probably involved in the binding of an intermediate of Fe/S cluster assembly. This chain is Iron-sulfur assembly protein 2 (ISA2), found in Saccharomyces cerevisiae (strain ATCC 204508 / S288c) (Baker's yeast).